Here is a 512-residue protein sequence, read N- to C-terminus: Kynurenine 3-monooxygenase (512 aa).

This sequence belongs to the aromatic-ring hydroxylase family. KMO subfamily. Requires FAD as cofactor.

The protein resides in the mitochondrion outer membrane. The enzyme catalyses L-kynurenine + NADPH + O2 + H(+) = 3-hydroxy-L-kynurenine + NADP(+) + H2O. It functions in the pathway cofactor biosynthesis; NAD(+) biosynthesis; quinolinate from L-kynurenine: step 1/3. Functionally, catalyzes the hydroxylation of L-kynurenine (L-Kyn) to form 3-hydroxy-L-kynurenine (L-3OHKyn). Required for synthesis of quinolinic acid. This chain is Kynurenine 3-monooxygenase (bna4), found in Aspergillus clavatus (strain ATCC 1007 / CBS 513.65 / DSM 816 / NCTC 3887 / NRRL 1 / QM 1276 / 107).